The primary structure comprises 340 residues: MIFIDACFKKPTPYTPIWMMRQAGRYLPEYMEVRKQAGDFLSLCKDYKKASEVSLQPIDILDVDAAIIFSDILVVPLEMGMNLRFEKGEGPVFGNPISTLEDLEKLDDQNAHKKLNYVYDALKLTREKLSQNKALIGFCGSPWTIATYMIEGSGSKNYAKCKKMLYQNPELLHKILNKLTQVLKLYLEEQIKAGANAIQIFDSWASALEYDKFFEFSFNYMLEISNFIKSKYPNIPVILFPKGISGYLDRIDGNFDVFGVDWSTPLDLARDKLSHKYTLQGNMEPCRLYDKNAIKEGVEKILKTMQNKAHIFNLGHGILPDIPVENAKYFIKLVQESSAK.

Substrate contacts are provided by residues 21 to 25 (RQAGR), F40, D71, Y148, S203, and H316.

Belongs to the uroporphyrinogen decarboxylase family. As to quaternary structure, homodimer.

The protein localises to the cytoplasm. The catalysed reaction is uroporphyrinogen III + 4 H(+) = coproporphyrinogen III + 4 CO2. It participates in porphyrin-containing compound metabolism; protoporphyrin-IX biosynthesis; coproporphyrinogen-III from 5-aminolevulinate: step 4/4. Its function is as follows. Catalyzes the decarboxylation of four acetate groups of uroporphyrinogen-III to yield coproporphyrinogen-III. This is Uroporphyrinogen decarboxylase from Campylobacter jejuni subsp. jejuni serotype O:2 (strain ATCC 700819 / NCTC 11168).